Consider the following 258-residue polypeptide: Neurotrophin-3 (258 aa).

The first 18 residues, 1–18 (MSILFYVIFLAYLRGIQG), serve as a signal peptide directing secretion. The propeptide occupies 19-139 (NSMDQRSLPE…ANRTSPRRKR (121 aa)). Positions 60–85 (QSTLPKAEAPREPEQGEATRSEFQPM) are disordered. Basic and acidic residues predominate over residues 67-79 (EAPREPEQGEATR). Asn-131 carries an N-linked (GlcNAc...) asparagine glycan. Disulfide bonds link Cys-153/Cys-218, Cys-196/Cys-247, and Cys-206/Cys-249.

Belongs to the NGF-beta family. As to expression, brain and peripheral tissues.

The protein resides in the secreted. Its function is as follows. Seems to promote the survival of visceral and proprioceptive sensory neurons. The protein is Neurotrophin-3 (Ntf3) of Mus musculus (Mouse).